Consider the following 406-residue polypeptide: MAIKALRGMKDILPPLSEKYLNFLQTASHYAHNYGFSYIETPLLEETALFKRSVGESSDIVGKEMYQFIDKGGNDIVLRPEGTAGVVRSFIEHKLDRQGGTHRFFYYGSMFRYERPQKGRFRQFHQFGVESFGEPSVYEDAAIITLAKAILDHFEIDYTLKINSLGCPVCLKPYREELIKFLEDQEHICDDCKRRRKLNPIRVLDCKNEQCQQIYENAPKLINNLCEECNQEFQTLKNLLDNEGIIYEVDENLVRGLDYYTRTAFEFVSNALGAQNAVAGGGRYDNLVEMLGGKPTPAVGFAIGIERILDLIKDKPVQREGYFIGVMLPEALNIAFDIATKLRQSNRVIMEYKPKSLKALLKGADRNNAKYALIIGEDEYNEGLVWIKDLERKEEKRVDIQNFMER.

It belongs to the class-II aminoacyl-tRNA synthetase family. As to quaternary structure, homodimer.

The protein resides in the cytoplasm. The catalysed reaction is tRNA(His) + L-histidine + ATP = L-histidyl-tRNA(His) + AMP + diphosphate + H(+). This is Histidine--tRNA ligase from Nitratiruptor sp. (strain SB155-2).